The sequence spans 622 residues: Chaperone protein HscA homolog (622 aa).

The protein belongs to the heat shock protein 70 family.

In terms of biological role, chaperone involved in the maturation of iron-sulfur cluster-containing proteins. Has a low intrinsic ATPase activity which is markedly stimulated by HscB. The protein is Chaperone protein HscA homolog of Burkholderia lata (strain ATCC 17760 / DSM 23089 / LMG 22485 / NCIMB 9086 / R18194 / 383).